Consider the following 429-residue polypeptide: UDP-N-acetylglucosamine 1-carboxyvinyltransferase (429 aa).

22 to 23 serves as a coordination point for phosphoenolpyruvate; it reads KN. Arginine 102 provides a ligand contact to UDP-N-acetyl-alpha-D-glucosamine. Cysteine 126 serves as the catalytic Proton donor. Cysteine 126 bears the 2-(S-cysteinyl)pyruvic acid O-phosphothioketal mark. UDP-N-acetyl-alpha-D-glucosamine-binding positions include 131 to 135, aspartate 316, and isoleucine 338; that span reads RPVDL.

Belongs to the EPSP synthase family. MurA subfamily.

The protein localises to the cytoplasm. It carries out the reaction phosphoenolpyruvate + UDP-N-acetyl-alpha-D-glucosamine = UDP-N-acetyl-3-O-(1-carboxyvinyl)-alpha-D-glucosamine + phosphate. It participates in cell wall biogenesis; peptidoglycan biosynthesis. Functionally, cell wall formation. Adds enolpyruvyl to UDP-N-acetylglucosamine. This Rhodopseudomonas palustris (strain BisB18) protein is UDP-N-acetylglucosamine 1-carboxyvinyltransferase.